The primary structure comprises 423 residues: Histidine--tRNA ligase (423 aa).

It belongs to the class-II aminoacyl-tRNA synthetase family. As to quaternary structure, homodimer.

It localises to the cytoplasm. It catalyses the reaction tRNA(His) + L-histidine + ATP = L-histidyl-tRNA(His) + AMP + diphosphate + H(+). The sequence is that of Histidine--tRNA ligase from Anoxybacillus flavithermus (strain DSM 21510 / WK1).